The sequence spans 216 residues: Pyrrolidone-carboxylate peptidase (216 aa).

Catalysis depends on residues glutamate 80, cysteine 143, and histidine 168.

This sequence belongs to the peptidase C15 family. Homotetramer.

The protein resides in the cytoplasm. The enzyme catalyses Release of an N-terminal pyroglutamyl group from a polypeptide, the second amino acid generally not being Pro.. Its function is as follows. Removes 5-oxoproline from various penultimate amino acid residues except L-proline. In Cupriavidus necator (strain ATCC 17699 / DSM 428 / KCTC 22496 / NCIMB 10442 / H16 / Stanier 337) (Ralstonia eutropha), this protein is Pyrrolidone-carboxylate peptidase.